Reading from the N-terminus, the 662-residue chain is Transketolase (662 aa).

H28 lines the substrate pocket. Thiamine diphosphate contacts are provided by residues H68 and 115-117; that span reads GPL. Residue D156 coordinates Mg(2+). Residues G157 and N186 each contribute to the thiamine diphosphate site. Mg(2+) is bound by residues N186 and I188. Substrate is bound by residues H261, R356, and S383. Position 261 (H261) interacts with thiamine diphosphate. E410 functions as the Proton donor in the catalytic mechanism. Residue F436 participates in thiamine diphosphate binding. Substrate contacts are provided by H460, D468, and R519.

This sequence belongs to the transketolase family. In terms of assembly, homodimer. Mg(2+) is required as a cofactor. Ca(2+) serves as cofactor. The cofactor is Mn(2+). Requires Co(2+) as cofactor. It depends on thiamine diphosphate as a cofactor.

It catalyses the reaction D-sedoheptulose 7-phosphate + D-glyceraldehyde 3-phosphate = aldehydo-D-ribose 5-phosphate + D-xylulose 5-phosphate. Its pathway is carbohydrate biosynthesis; Calvin cycle. The protein operates within carbohydrate degradation; pentose phosphate pathway. Functionally, catalyzes the transfer of a two-carbon ketol group from a ketose donor to an aldose acceptor, via a covalent intermediate with the cofactor thiamine pyrophosphate. The sequence is that of Transketolase (tkt) from Staphylococcus epidermidis (strain ATCC 35984 / DSM 28319 / BCRC 17069 / CCUG 31568 / BM 3577 / RP62A).